The primary structure comprises 291 residues: Phycobilisome 32.1 kDa linker polypeptide, phycocyanin-associated, rod 1 (291 aa).

The PBS-linker domain maps to 2–179 (AITTAASRLG…LYRGYANSDR (178 aa)). The region spanning 236 to 288 (SKLFRVEITAISAPGYPKVRRSNKAVIVPFEQLNQTLQQINRLGGKVASITPA) is the CpcD-like domain.

The protein belongs to the phycobilisome linker protein family. In terms of assembly, part of 2 PBS rod complexes, the conventional CpcG-PBS rod and a photosystem I-specific CpcL-PBS rod, both of which include ferredoxin--NADP reductase (petH). CpcG-PBS has on average 3 stacked phycocyanin hexamers (PC, CpcA and CpcB). Linker CpcG connects the PC stack to the thylakoid, the hexamers are linked by 1 copy of CpcC1, 1 copy of CpcC2 and the stack is terminated by a single copy of CpcD. The CpcL-PBS has on average 5 stacked phycocyanin hexamers (PC, CpcA and CpcB). Linker CpcL connects the PC stack to the thylakoid, the hexamers are linked by 1 copy of CpcC1, 3 copies of CpcC2 and the stack is terminated by a single copy of CpcD.

It is found in the cellular thylakoid membrane. Rod linker protein, connecting hexameric phycocyanin (PC, made by cpcA and cpcB) rods in the phycobilisome (PBS). PC is the major phycobiliprotein in PBS rods. Linker polypeptides determine the state of aggregation and the location of the disk-shaped phycobiliprotein units within the phycobilisome and modulate their spectroscopic properties in order to mediate a directed and optimal energy transfer. This is Phycobilisome 32.1 kDa linker polypeptide, phycocyanin-associated, rod 1 (cpcC1) from Synechocystis sp. (strain ATCC 27184 / PCC 6803 / Kazusa).